A 310-amino-acid polypeptide reads, in one-letter code: Olfactory receptor 9Q1 (310 aa).

At 1–25 (MAEMNLTLVTEFLLIAFTEYPEWAL) the chain is on the extracellular side. An N-linked (GlcNAc...) asparagine glycan is attached at N5. A helical membrane pass occupies residues 26–46 (PLFLLFLFMYLITVLGNLEMI). Topologically, residues 47–54 (ILILMDHQ) are cytoplasmic. A helical transmembrane segment spans residues 55-75 (LHAPMYFLLSHLAFMDVCYSS). Topologically, residues 76–99 (ITVPQMLAVLLEHGAALSYTRCAA) are extracellular. Cysteines 97 and 189 form a disulfide. Residues 100–120 (QFFLFTFFGSIDCYLLALMAY) form a helical membrane-spanning segment. Topologically, residues 121 to 139 (DRYLAVCQPLLYVTILTQQ) are cytoplasmic. Residues 140-160 (ARLSLVAGAYVAGLISALVRT) form a helical membrane-spanning segment. Topologically, residues 161-197 (VSAFTLSFCGTSEIDFIFCDLPPLLKLTCGESYTQEV) are extracellular. Residues 198 to 217 (LIIMFAIFVIPASMVVILVS) form a helical membrane-spanning segment. The Cytoplasmic segment spans residues 218–236 (YLFIIVAIMGIPAGSQAKT). A helical transmembrane segment spans residues 237 to 257 (FSTCTSHLTAVSLFFGTLIFM). Residues 258-270 (YLRGNSDQSSEKN) lie on the Extracellular side of the membrane. Residues 271–291 (RVVSVLYTEVIPMLNPLIYSL) form a helical membrane-spanning segment. Residues 292–310 (RNKEVKEALRKILNRAKLS) lie on the Cytoplasmic side of the membrane.

This sequence belongs to the G-protein coupled receptor 1 family.

The protein localises to the cell membrane. Odorant receptor. This chain is Olfactory receptor 9Q1 (OR9Q1), found in Homo sapiens (Human).